The sequence spans 782 residues: Isoamylase 3, chloroplastic (782 aa).

The N-terminal 68 residues, 1-68, are a transit peptide targeting the chloroplast; the sequence is MDSIGINRAP…EKVRRFDSVR (68 aa). Over residues 68–81 the composition is skewed to polar residues; sequence RSTTARAQNGNAGR. Residues 68 to 88 are disordered; the sequence is RSTTARAQNGNAGRSMTEERG. Aspartate 445 functions as the Nucleophile in the catalytic mechanism. Glutamate 482 (proton donor) is an active-site residue.

This sequence belongs to the glycosyl hydrolase 13 family. Expressed in leaves. Expressed at low levels in developing endosperm.

It localises to the plastid. The protein localises to the chloroplast. Its subcellular location is the amyloplast. It carries out the reaction Hydrolysis of (1-&gt;6)-alpha-D-glucosidic branch linkages in glycogen, amylopectin and their beta-limit dextrins.. In terms of biological role, starch-debranching enzyme that plays a role in the degradation of transitory starch during the night in leaf blades, facilitates the formation of spherical amyloplasts containing compound granules in the endosperm, and affects morphological characteristics of plastids. The protein is Isoamylase 3, chloroplastic of Oryza sativa subsp. japonica (Rice).